We begin with the raw amino-acid sequence, 212 residues long: HTH-type transcriptional regulator RutR (212 aa).

One can recognise an HTH tetR-type domain in the interval 17–77 (SAKKKAILSA…AVLRQILDIW (61 aa)). The H-T-H motif DNA-binding region spans 39-58 (TRLEQIAELAGVSKTNLLYY).

As to quaternary structure, homodimer.

In terms of biological role, master transcription regulator which represses the degradation of pyrimidines (rutABCDEFG) and purines (gcl operon) for maintenance of metabolic balance between pyrimidines and purines. It also regulates the synthesis of pyrimidine nucleotides and arginine from glutamine (carAB) and the supply of glutamate (gadABWX). This chain is HTH-type transcriptional regulator RutR (rutR), found in Escherichia coli O157:H7.